The sequence spans 364 residues: Mannitol-1-phosphate 5-dehydrogenase (364 aa).

Residue Val6–Gly17 coordinates NAD(+).

The protein belongs to the mannitol dehydrogenase family.

The catalysed reaction is D-mannitol 1-phosphate + NAD(+) = beta-D-fructose 6-phosphate + NADH + H(+). This chain is Mannitol-1-phosphate 5-dehydrogenase (mtlD), found in Mycoplasma pneumoniae (strain ATCC 29342 / M129 / Subtype 1) (Mycoplasmoides pneumoniae).